The sequence spans 231 residues: GFP-like fluorescent chromoprotein FP538 (231 aa).

Position 65 is a phenylalanine amide; atypical (Phe65). The 2-tetrahydro-2-pyridyl-5-imidazolinone (Lys-Gly) cross-link spans 66 to 68; it reads KYG. 2,3-didehydrotyrosine is present on Tyr67.

The protein belongs to the GFP family. In terms of assembly, homotetramer. In terms of processing, contains a chromophore consisting of modified amino acid residues. The chromophore is formed by autocatalytic backbone condensation between Xaa-N and Gly-(N+2), and oxidation of Tyr-(N+1) to didehydrotyrosine. In addition, the residue N lysine undergoes cyclization. The alpha-amino nitrogen is replaced by the epsilon-amino nitrogen, the peptide chain is broken, residue N-1 is released as an amide, and a double bond is formed between the alpha-carbon and the nitrogen so that a tetrahydropyridine ring results. Maturation of the chromophore requires nothing other than molecular oxygen. Tentacle and oral disk.

Pigment protein that is yellow in color. The sequence is that of GFP-like fluorescent chromoprotein FP538 from Zoanthus sp. (Green polyp).